Reading from the N-terminus, the 564-residue chain is 4-coumarate--CoA ligase 1 (564 aa).

ATP contacts are provided by Ser-209, Ser-210, Gly-211, Thr-212, Thr-213, and Lys-217. Residues Tyr-259 and Thr-263 each coordinate (E)-4-coumaroyl-AMP. Arg-280 lines the CoA pocket. The tract at residues 282-351 (DLAAMMDLVE…AKLPGAVLGQ (70 aa)) is SBD1. Ala-329, Gln-351, Gly-352, Thr-356, and Met-364 together coordinate (E)-4-coumaroyl-AMP. Residues Gln-351, Gly-352, and Thr-356 each contribute to the ATP site. The SBD2 stretch occupies residues 352 to 419 (GYGMTEAGPV…IRGQQIMKGY (68 aa)). Positions 440 and 455 each coordinate ATP. Lys-457 and Lys-461 together coordinate (E)-4-coumaroyl-AMP. The CoA site is built by Arg-463 and Gly-464. ATP is bound at residue Lys-547.

It belongs to the ATP-dependent AMP-binding enzyme family. Mg(2+) is required as a cofactor. As to expression, expressed in roots, stems, leaf blades and leaf sheaths.

The catalysed reaction is (E)-ferulate + ATP + CoA = (E)-feruloyl-CoA + AMP + diphosphate. It carries out the reaction (E)-4-coumarate + ATP + CoA = (E)-4-coumaroyl-CoA + AMP + diphosphate. It catalyses the reaction (E)-cinnamate + ATP + CoA = (E)-cinnamoyl-CoA + AMP + diphosphate. The enzyme catalyses (E)-caffeate + ATP + CoA = (E)-caffeoyl-CoA + AMP + diphosphate. The catalysed reaction is (E)-ferulate + ATP + H(+) = (E)-feruloyl-AMP + diphosphate. It carries out the reaction (E)-feruloyl-AMP + CoA = (E)-feruloyl-CoA + AMP + H(+). It catalyses the reaction (E)-4-coumarate + ATP + H(+) = (E)-4-coumaroyl-AMP + diphosphate. The enzyme catalyses (E)-4-coumaroyl-AMP + CoA = (E)-4-coumaroyl-CoA + AMP + H(+). The catalysed reaction is (E)-caffeate + ATP + H(+) = (E)-caffeoyl-AMP + diphosphate. It carries out the reaction (E)-caffeoyl-AMP + CoA = (E)-caffeoyl-CoA + AMP + H(+). Its pathway is phytoalexin biosynthesis; 3,4',5-trihydroxystilbene biosynthesis; 3,4',5-trihydroxystilbene from trans-4-coumarate: step 1/2. Functionally, involved in the phenylpropanoid metabolism by mediating the activation of a number of hydroxycinnamates for the biosynthesis of monolignols and other phenolic secondary metabolites. Catalyzes the formation of CoA esters of cinnamate, 4-coumarate, caffeate and ferulate. Is more efficient with substrates in the following order: ferulate &gt; 4-coumarate &gt; cinnamate &gt; caffeate. Cannot convert sinapate to its corresponding CoA ester. Follows a two-step reaction mechanism, wherein the carboxylate substrate first undergoes adenylation by ATP, followed by a thioesterification in the presence of CoA to yield the final CoA thioester. The polypeptide is 4-coumarate--CoA ligase 1 (Oryza sativa subsp. japonica (Rice)).